The following is a 317-amino-acid chain: Small ribosomal subunit protein RACK1 (317 aa).

WD repeat units follow at residues 13–44 (GHSGWVTQIATTPQFPDMILSASRDKTIIMWK), 61–91 (GHSHFVSDVVISSDGQFALSGSWDGTLRLWD), 103–133 (GHTKDVLSVAFSADNRQIVSGSRDKTIKLWN), 146–178 (SHTEWVSCVRFSPNSSNPIIVSCGWDKMVKVWN), 190–220 (GHTGYLNTVTVSPDGSLCASGGKDGQAMLWD), 231–260 (DGGDTINALCFSPNRYWLCAATGPSIKIWD), and 281–311 (AEPPQCTSLAWSADGQTLFAGYTDNLIRVWQ).

It belongs to the WD repeat G protein beta family. Ribosomal protein RACK1 subfamily.

It localises to the cytoplasm. Its function is as follows. Involved in the recruitment, assembly and/or regulation of a variety of signaling molecules. Interacts with a wide variety of proteins and plays a role in many cellular processes. Required for VANGL2 membrane localization, inhibits Wnt signaling and regulates cellular polarization and oriented cell division during gastrulation. The chain is Small ribosomal subunit protein RACK1 (gnb2l1) from Danio rerio (Zebrafish).